Reading from the N-terminus, the 70-residue chain is Gas vesicle protein A (70 aa).

Belongs to the gas vesicle GvpA family. As to quaternary structure, the gas vesicle shell is 2 nm thick and consists of a single layer of this protein. It forms helical ribs nearly perpendicular to the long axis of the vesicle.

The protein localises to the gas vesicle shell. Functionally, gas vesicles are hollow, gas filled proteinaceous nanostructures found in some microorganisms. During planktonic growth they allow positioning of the organism at a favorable depth for light or nutrient acquisition. GvpA forms the protein shell. This Bradyrhizobium sp. (strain ORS 278) protein is Gas vesicle protein A.